The primary structure comprises 276 residues: Large ribosomal subunit protein uL2 (276 aa).

Residues 224–254 are disordered; sequence VMNPVDHPHGGGEGRTSGGRHPVTPWGVPTK.

Belongs to the universal ribosomal protein uL2 family. In terms of assembly, part of the 50S ribosomal subunit. Forms a bridge to the 30S subunit in the 70S ribosome.

Functionally, one of the primary rRNA binding proteins. Required for association of the 30S and 50S subunits to form the 70S ribosome, for tRNA binding and peptide bond formation. It has been suggested to have peptidyltransferase activity; this is somewhat controversial. Makes several contacts with the 16S rRNA in the 70S ribosome. This chain is Large ribosomal subunit protein uL2, found in Gluconobacter oxydans (strain 621H) (Gluconobacter suboxydans).